The chain runs to 398 residues: 4-hydroxy-3-methylbut-2-enyl diphosphate reductase (398 aa).

Cys-66 serves as a coordination point for [4Fe-4S] cluster. His-96 is a binding site for (2E)-4-hydroxy-3-methylbut-2-enyl diphosphate. His-96 serves as a coordination point for dimethylallyl diphosphate. Residue His-96 coordinates isopentenyl diphosphate. Residue Cys-157 coordinates [4Fe-4S] cluster. (2E)-4-hydroxy-3-methylbut-2-enyl diphosphate is bound at residue His-185. His-185 is a binding site for dimethylallyl diphosphate. His-185 contributes to the isopentenyl diphosphate binding site. Glu-187 (proton donor) is an active-site residue. A (2E)-4-hydroxy-3-methylbut-2-enyl diphosphate-binding site is contributed by Thr-250. Position 288 (Cys-288) interacts with [4Fe-4S] cluster. Residues Ser-317, Ser-318, Asn-319, and Ser-380 each contribute to the (2E)-4-hydroxy-3-methylbut-2-enyl diphosphate site. Dimethylallyl diphosphate-binding residues include Ser-317, Ser-318, Asn-319, and Ser-380. Isopentenyl diphosphate contacts are provided by Ser-317, Ser-318, Asn-319, and Ser-380.

This sequence belongs to the IspH family. Requires [4Fe-4S] cluster as cofactor.

It catalyses the reaction isopentenyl diphosphate + 2 oxidized [2Fe-2S]-[ferredoxin] + H2O = (2E)-4-hydroxy-3-methylbut-2-enyl diphosphate + 2 reduced [2Fe-2S]-[ferredoxin] + 2 H(+). It carries out the reaction dimethylallyl diphosphate + 2 oxidized [2Fe-2S]-[ferredoxin] + H2O = (2E)-4-hydroxy-3-methylbut-2-enyl diphosphate + 2 reduced [2Fe-2S]-[ferredoxin] + 2 H(+). The protein operates within isoprenoid biosynthesis; dimethylallyl diphosphate biosynthesis; dimethylallyl diphosphate from (2E)-4-hydroxy-3-methylbutenyl diphosphate: step 1/1. It functions in the pathway isoprenoid biosynthesis; isopentenyl diphosphate biosynthesis via DXP pathway; isopentenyl diphosphate from 1-deoxy-D-xylulose 5-phosphate: step 6/6. Functionally, catalyzes the conversion of 1-hydroxy-2-methyl-2-(E)-butenyl 4-diphosphate (HMBPP) into a mixture of isopentenyl diphosphate (IPP) and dimethylallyl diphosphate (DMAPP). Acts in the terminal step of the DOXP/MEP pathway for isoprenoid precursor biosynthesis. The protein is 4-hydroxy-3-methylbut-2-enyl diphosphate reductase of Prochlorococcus marinus (strain MIT 9515).